Here is a 154-residue protein sequence, read N- to C-terminus: Myoglobin (154 aa).

Residues 2–148 (GLSDGEWQLV…FRNDIAAKYK (147 aa)) form the Globin domain. S4 carries the post-translational modification Phosphoserine. Position 65 (H65) interacts with nitrite. Residue H65 participates in O2 binding. The residue at position 68 (T68) is a Phosphothreonine. H94 lines the heme b pocket.

Belongs to the globin family. In terms of assembly, monomeric.

Its subcellular location is the cytoplasm. It localises to the sarcoplasm. It carries out the reaction Fe(III)-heme b-[protein] + nitric oxide + H2O = Fe(II)-heme b-[protein] + nitrite + 2 H(+). The enzyme catalyses H2O2 + AH2 = A + 2 H2O. Functionally, monomeric heme protein which primary function is to store oxygen and facilitate its diffusion within muscle tissues. Reversibly binds oxygen through a pentacoordinated heme iron and enables its timely and efficient release as needed during periods of heightened demand. Depending on the oxidative conditions of tissues and cells, and in addition to its ability to bind oxygen, it also has a nitrite reductase activity whereby it regulates the production of bioactive nitric oxide. Under stress conditions, like hypoxia and anoxia, it also protects cells against reactive oxygen species thanks to its pseudoperoxidase activity. The protein is Myoglobin (MB) of Spalax ehrenbergi (Middle East blind mole rat).